Here is a 286-residue protein sequence, read N- to C-terminus: Shikimate dehydrogenase (NADP(+)) (286 aa).

Shikimate is bound by residues 20 to 22 (SLS) and T65. The active-site Proton acceptor is the K69. D81 is a binding site for NADP(+). Shikimate is bound by residues N90 and D105. Residues 128 to 132 (GAGGA) and T217 each bind NADP(+). Y219 contacts shikimate. G240 provides a ligand contact to NADP(+).

This sequence belongs to the shikimate dehydrogenase family. As to quaternary structure, homodimer.

The catalysed reaction is shikimate + NADP(+) = 3-dehydroshikimate + NADPH + H(+). Its pathway is metabolic intermediate biosynthesis; chorismate biosynthesis; chorismate from D-erythrose 4-phosphate and phosphoenolpyruvate: step 4/7. Involved in the biosynthesis of the chorismate, which leads to the biosynthesis of aromatic amino acids. Catalyzes the reversible NADPH linked reduction of 3-dehydroshikimate (DHSA) to yield shikimate (SA). The chain is Shikimate dehydrogenase (NADP(+)) from Syntrophobacter fumaroxidans (strain DSM 10017 / MPOB).